The following is a 348-amino-acid chain: MSQKNFVELRNVTKRFGSNTVIDNINLTIPQGQMVTLLGPSGCGKTTILRLVAGLEKPSEGQIFIDGEDVTHRSIQQRDICMVFQSYALFPHMSLGENVGYGLKMLGVSRSEVKQRVKEALAMVDLEGFEDRYVDQISGGQQQRVALARALILKPKVLLFDEPLSNLDANLRRSMRDKIRELQKQFNITSLYVTHDQSEAFAVSDTVLVMNKGHIMQIGSPQDLYRQPASRFMASFMGDANLFPANFSEEYVDIYGYRLPRAAHFPVQGSGTVGVRPEAITLSNHGEESQRCVIRHVAYMGPQYEVTVEWHGQEILLQVNATRLQPDIGEHYYLEIHPYGMFVLADAA.

Positions 7-237 constitute an ABC transporter domain; the sequence is VELRNVTKRF…PASRFMASFM (231 aa). 39–46 lines the ATP pocket; the sequence is GPSGCGKT.

This sequence belongs to the ABC transporter superfamily. Fe(3+) ion importer (TC 3.A.1.10) family. The complex is composed of two ATP-binding proteins (FbpC), two transmembrane proteins (FbpB) and a solute-binding protein (FbpA).

It localises to the cell inner membrane. It carries out the reaction Fe(3+)(out) + ATP + H2O = Fe(3+)(in) + ADP + phosphate + H(+). In terms of biological role, part of the ABC transporter complex FbpABC involved in Fe(3+) ions import. Responsible for energy coupling to the transport system. The protein is Fe(3+) ions import ATP-binding protein FbpC of Escherichia coli O157:H7.